The chain runs to 402 residues: mRNA-capping enzyme subunit alpha (402 aa).

Lysine 67 acts as the N6-GMP-lysine intermediate in catalysis. Residues 374-402 (SVTKRKLDETSNDDAPAIKKVAKESEKEI) are disordered.

Belongs to the eukaryotic GTase family. In terms of assembly, heterodimer. The mRNA-capping enzyme is composed of two separate chains alpha and beta, respectively a mRNA guanylyltransferase and an mRNA 5'-triphosphate monophosphatase.

Its subcellular location is the nucleus. It catalyses the reaction a 5'-end diphospho-ribonucleoside in mRNA + GTP + H(+) = a 5'-end (5'-triphosphoguanosine)-ribonucleoside in mRNA + diphosphate. In terms of biological role, second step of mRNA capping. Transfer of the GMP moiety of GTP to the 5'-end of RNA via an enzyme-GMP covalent reaction intermediate. In Schizosaccharomyces pombe (strain 972 / ATCC 24843) (Fission yeast), this protein is mRNA-capping enzyme subunit alpha (ceg1).